A 463-amino-acid polypeptide reads, in one-letter code: Ribosomal protein uS12 methylthiotransferase RimO (463 aa).

An MTTase N-terminal domain is found at 15-130 (PKVGMVSLGC…VMQAVHSHLP (116 aa)). The [4Fe-4S] cluster site is built by Cys24, Cys60, Cys89, Cys161, Cys165, and Cys168. A Radical SAM core domain is found at 147–392 (LTPRHYAYLK…MEVAEEVSAA (246 aa)). The region spanning 395–463 (ARKIGKTLKV…ADGHDLWGEV (69 aa)) is the TRAM domain.

It belongs to the methylthiotransferase family. RimO subfamily. The cofactor is [4Fe-4S] cluster.

It localises to the cytoplasm. It catalyses the reaction L-aspartate(89)-[ribosomal protein uS12]-hydrogen + (sulfur carrier)-SH + AH2 + 2 S-adenosyl-L-methionine = 3-methylsulfanyl-L-aspartate(89)-[ribosomal protein uS12]-hydrogen + (sulfur carrier)-H + 5'-deoxyadenosine + L-methionine + A + S-adenosyl-L-homocysteine + 2 H(+). Catalyzes the methylthiolation of an aspartic acid residue of ribosomal protein uS12. This is Ribosomal protein uS12 methylthiotransferase RimO from Burkholderia mallei (strain NCTC 10229).